The chain runs to 1873 residues: Replicase polyprotein 1a (1873 aa).

Active-site for leader protease activity residues include C344 and H393. An Alphavirus-like MT domain is found at 495 to 674 (SFNQKSYSNH…HSCQTLKDIL (180 aa)). The segment at 1356 to 1381 (VMPPLEEVETPKRSVGRPSSKQDDIE) is disordered. In terms of domain architecture, (+)RNA virus helicase ATP-binding spans 1538-1705 (RGMYSNERCR…FFRKQDLNYD (168 aa)). The (+)RNA virus helicase C-terminal domain occupies 1706 to 1873 (TYTYRCPLDT…LKDYHFRQCL (168 aa)).

The catalysed reaction is ATP + H2O = ADP + phosphate + H(+). The sequence is that of Replicase polyprotein 1a from Beta vulgaris (Sugar beet).